A 446-amino-acid chain; its full sequence is Na(+)-translocating NADH-quinone reductase subunit A (446 aa).

This sequence belongs to the NqrA family. In terms of assembly, composed of six subunits; NqrA, NqrB, NqrC, NqrD, NqrE and NqrF.

The catalysed reaction is a ubiquinone + n Na(+)(in) + NADH + H(+) = a ubiquinol + n Na(+)(out) + NAD(+). In terms of biological role, NQR complex catalyzes the reduction of ubiquinone-1 to ubiquinol by two successive reactions, coupled with the transport of Na(+) ions from the cytoplasm to the periplasm. NqrA to NqrE are probably involved in the second step, the conversion of ubisemiquinone to ubiquinol. In Pasteurella multocida (strain Pm70), this protein is Na(+)-translocating NADH-quinone reductase subunit A.